Here is a 404-residue protein sequence, read N- to C-terminus: Formate-dependent phosphoribosylglycinamide formyltransferase (404 aa).

N(1)-(5-phospho-beta-D-ribosyl)glycinamide is bound by residues 27–28 (EL) and E87. ATP is bound by residues R120, K162, 167–172 (SSGKGQ), 202–205 (EGFI), and E210. An ATP-grasp domain is found at 125–320 (RLAAETLGLP…EFELHARALL (196 aa)). Residues E279 and E291 each contribute to the Mg(2+) site. Residues D298, K367, and 374–375 (RR) each bind N(1)-(5-phospho-beta-D-ribosyl)glycinamide.

It belongs to the PurK/PurT family. As to quaternary structure, homodimer.

It catalyses the reaction N(1)-(5-phospho-beta-D-ribosyl)glycinamide + formate + ATP = N(2)-formyl-N(1)-(5-phospho-beta-D-ribosyl)glycinamide + ADP + phosphate + H(+). Its pathway is purine metabolism; IMP biosynthesis via de novo pathway; N(2)-formyl-N(1)-(5-phospho-D-ribosyl)glycinamide from N(1)-(5-phospho-D-ribosyl)glycinamide (formate route): step 1/1. Involved in the de novo purine biosynthesis. Catalyzes the transfer of formate to 5-phospho-ribosyl-glycinamide (GAR), producing 5-phospho-ribosyl-N-formylglycinamide (FGAR). Formate is provided by PurU via hydrolysis of 10-formyl-tetrahydrofolate. The polypeptide is Formate-dependent phosphoribosylglycinamide formyltransferase (Bordetella pertussis (strain Tohama I / ATCC BAA-589 / NCTC 13251)).